A 259-amino-acid chain; its full sequence is Putative cysteine-rich repeat secretory protein 25 (259 aa).

A signal peptide spans 1-31; the sequence is MSSSFLSRPLVSVYVFAMVTMQLLFMQSVLS. Gnk2-homologous domains are found at residues 37–138 and 144–256; these read AYLN…SIYT and YRHI…LYPF.

This sequence belongs to the cysteine-rich repeat secretory protein family.

The protein resides in the secreted. The polypeptide is Putative cysteine-rich repeat secretory protein 25 (CRRSP25) (Arabidopsis thaliana (Mouse-ear cress)).